Consider the following 498-residue polypeptide: L-proline--[L-prolyl-carrier protein] ligase (498 aa).

Belongs to the ATP-dependent AMP-binding enzyme family.

The catalysed reaction is holo-[peptidyl-carrier protein] + L-proline + ATP = L-prolyl-[peptidyl-carrier protein] + AMP + diphosphate. In terms of biological role, involved in the biosynthesis of pyoluteorin. Catalyzes the conversion of L-proline to L-prolyl-AMP and the transfer of the L-prolyl group to acyl carrier protein PltL. This Pseudomonas fluorescens (strain ATCC BAA-477 / NRRL B-23932 / Pf-5) protein is L-proline--[L-prolyl-carrier protein] ligase.